Here is a 316-residue protein sequence, read N- to C-terminus: Very-long-chain 3-oxooacyl-coA reductase let-767 (316 aa).

NADP(+) contacts are provided by residues 47-76 (ASWA…NVLL) and Asp-106. Position 189 (Ser-189) interacts with substrate. Tyr-202 functions as the Proton acceptor in the catalytic mechanism. Position 206 (Lys-206) interacts with NADP(+).

It belongs to the short-chain dehydrogenases/reductases (SDR) family. 17-beta-HSD 3 subfamily. Expressed in the gut of larva and adult.

The catalysed reaction is a very-long-chain (3R)-3-hydroxyacyl-CoA + NADP(+) = a very-long-chain 3-oxoacyl-CoA + NADPH + H(+). The enzyme catalyses (omega-1)-methyl-(3R)-hydroxy-fatty acyl-CoA + NADP(+) = (omega-1)-methyl-3-oxo-fatty acyl-CoA + NADPH + H(+). It catalyses the reaction a 17beta-hydroxy steroid + NADP(+) = a 17-oxo steroid + NADPH + H(+). It functions in the pathway lipid metabolism; fatty acid biosynthesis. Functionally, required for branched-chain fatty acid synthesis (such as (omega-1)-methyl-fatty acids). Catalyzes the reduction of the 3-keto-fatty acyl-CoA intermediate that is formed in each cycle of fatty acid elongation. Very long-chain fatty acids (VLCFAs) serve as precursors for ceramide and sphingolipids. Involved in hormone production as it metabolizes 4-androstendione (androst-4-ene-3,17-dione) into testosterone and estrone into estradiol (17beta-estradiol) in vitro, but the physiological steroid substrate is unknown. The chain is Very-long-chain 3-oxooacyl-coA reductase let-767 (let-767) from Caenorhabditis elegans.